Here is a 396-residue protein sequence, read N- to C-terminus: 8-amino-7-oxononanoate synthase (396 aa).

Residue arginine 31 participates in substrate binding. Residue 118–119 (GY) participates in pyridoxal 5'-phosphate binding. A substrate-binding site is contributed by histidine 143. Pyridoxal 5'-phosphate is bound by residues serine 189, histidine 217, and threonine 245. Lysine 248 carries the post-translational modification N6-(pyridoxal phosphate)lysine. Threonine 362 is a substrate binding site.

The protein belongs to the class-II pyridoxal-phosphate-dependent aminotransferase family. BioF subfamily. In terms of assembly, homodimer. It depends on pyridoxal 5'-phosphate as a cofactor.

It catalyses the reaction 6-carboxyhexanoyl-[ACP] + L-alanine + H(+) = (8S)-8-amino-7-oxononanoate + holo-[ACP] + CO2. Its pathway is cofactor biosynthesis; biotin biosynthesis. Its function is as follows. Catalyzes the decarboxylative condensation of pimeloyl-[acyl-carrier protein] and L-alanine to produce 8-amino-7-oxononanoate (AON), [acyl-carrier protein], and carbon dioxide. The sequence is that of 8-amino-7-oxononanoate synthase from Methylobacillus flagellatus (strain ATCC 51484 / DSM 6875 / VKM B-1610 / KT).